Here is a 434-residue protein sequence, read N- to C-terminus: MVVKFTKSEALHKEALEHIVGGVNSPSRSFKAVGGGAPVAMERGKGAYFWDVDGNKYIDYLAAYGPIITGHAHPHITKAITTAAENGVLYGTPTALEVKFAKMLKEAMPALDKVRFVNSGTEAVMTTIRVARAYTGRTKIMKFAGCYHGHSDLVLVAAGSGPSTLGTPDSAGVPQSIAQEVITVPFNNVETLKEALDKWGHEVAAILVEPIVGNFGIVEPKPGFLEKVNELVHEAGALVIYDEVITAFRFMYGGAQDLLGVTPDLTALGKVIGGGLPIGAYGGKKEIMEQVAPLGPAYQAGTMAGNPASMASGIACLEVLQQEGLYEKLDELGAMLEKGILEQAEKHNIDITLNRLKGALTVYFTTNTIEDYDAAQDTDGEMFGKFFKLMLQEGINLAPSKYEAWFLTTEHTKEDIEYTIEAVGRAFAALANNK.

At Lys-270 the chain carries N6-(pyridoxal phosphate)lysine.

It belongs to the class-III pyridoxal-phosphate-dependent aminotransferase family. HemL subfamily. In terms of assembly, homodimer. The cofactor is pyridoxal 5'-phosphate.

The protein localises to the cytoplasm. The catalysed reaction is (S)-4-amino-5-oxopentanoate = 5-aminolevulinate. Its pathway is porphyrin-containing compound metabolism; protoporphyrin-IX biosynthesis; 5-aminolevulinate from L-glutamyl-tRNA(Glu): step 2/2. The polypeptide is Glutamate-1-semialdehyde 2,1-aminomutase 1 (Bacillus cereus (strain AH187)).